We begin with the raw amino-acid sequence, 287 residues long: ATP synthase gamma chain (287 aa).

It belongs to the ATPase gamma chain family. In terms of assembly, F-type ATPases have 2 components, CF(1) - the catalytic core - and CF(0) - the membrane proton channel. CF(1) has five subunits: alpha(3), beta(3), gamma(1), delta(1), epsilon(1). CF(0) has three main subunits: a, b and c.

The protein resides in the cell inner membrane. In terms of biological role, produces ATP from ADP in the presence of a proton gradient across the membrane. The gamma chain is believed to be important in regulating ATPase activity and the flow of protons through the CF(0) complex. In Geotalea uraniireducens (strain Rf4) (Geobacter uraniireducens), this protein is ATP synthase gamma chain.